A 596-amino-acid polypeptide reads, in one-letter code: Cysteine--tRNA ligase (596 aa).

A unknown region spans residues 1 to 199 (MKSKTFLEKN…SQRYFEELRK (199 aa)). Zn(2+) is bound at residue cysteine 212. The short motif at 214 to 224 (PTVYDEVHIGN) is the 'HIGH' region element. Zn(2+) is bound by residues cysteine 377, histidine 403, and glutamate 407. The 'KMSKS' region motif lies at 435–439 (KMSKS). Lysine 438 provides a ligand contact to ATP.

The protein belongs to the class-I aminoacyl-tRNA synthetase family. Monomer. Zn(2+) is required as a cofactor.

It localises to the cytoplasm. The enzyme catalyses tRNA(Cys) + L-cysteine + ATP = L-cysteinyl-tRNA(Cys) + AMP + diphosphate. This Mycoplasmopsis pulmonis (strain UAB CTIP) (Mycoplasma pulmonis) protein is Cysteine--tRNA ligase (cysS).